The following is a 368-amino-acid chain: F-box protein At3g17710 (368 aa).

Residues 1 to 46 (MASVKLPWDLEEEILSRLPPRSLVRFRTVCKHWNGLFSDKRFVKKH) enclose the F-box domain.

The sequence is that of F-box protein At3g17710 from Arabidopsis thaliana (Mouse-ear cress).